The chain runs to 67 residues: COP9 signalosome complex subunit 9 homolog (67 aa).

Residues 1 to 31 (MKPSLAADEMFSEGPGYMEMDESGGATGMMM) form a disordered region.

This sequence belongs to the CSN9 family. In terms of assembly, probable component of the COP9 signalosome (CSN) complex.

Component of the COP9 signalosome complex (CSN), a complex involved in various cellular and developmental processes. The CSN complex is an essential regulator of the ubiquitin (Ubl) conjugation pathway by mediating the deneddylation of the cullin subunits of SCF-type E3 ligase complexes, leading to decrease the Ubl ligase activity. In Drosophila melanogaster (Fruit fly), this protein is COP9 signalosome complex subunit 9 homolog.